The chain runs to 112 residues: T cell receptor alpha variable 21 (112 aa).

The first 19 residues, 1–19, serve as a signal peptide directing secretion; that stretch reads METLLGLLILWLQLQWVSS. Residues 21-112 enclose the Ig-like domain; it reads QEVTQIPAAL…DSATYLCAVR (92 aa). Residues asparagine 41 and asparagine 82 are each glycosylated (N-linked (GlcNAc...) asparagine). A disulfide bond links cysteine 42 and cysteine 109.

Alpha-beta TR is a heterodimer composed of an alpha and beta chain; disulfide-linked. The alpha-beta TR is associated with the transmembrane signaling CD3 coreceptor proteins to form the TR-CD3 (TcR or TCR). The assembly of alpha-beta TR heterodimers with CD3 occurs in the endoplasmic reticulum where a single alpha-beta TR heterodimer associates with one CD3D-CD3E heterodimer, one CD3G-CD3E heterodimer and one CD247 homodimer forming a stable octameric structure. CD3D-CD3E and CD3G-CD3E heterodimers preferentially associate with TR alpha and TR beta chains, respectively. The association of the CD247 homodimer is the last step of TcR assembly in the endoplasmic reticulum and is required for transport to the cell surface.

The protein localises to the cell membrane. Its function is as follows. V region of the variable domain of T cell receptor (TR) alpha chain that participates in the antigen recognition. Alpha-beta T cell receptors are antigen specific receptors which are essential to the immune response and are present on the cell surface of T lymphocytes. Recognize peptide-major histocompatibility (MH) (pMH) complexes that are displayed by antigen presenting cells (APC), a prerequisite for efficient T cell adaptive immunity against pathogens. Binding of alpha-beta TR to pMH complex initiates TR-CD3 clustering on the cell surface and intracellular activation of LCK that phosphorylates the ITAM motifs of CD3G, CD3D, CD3E and CD247 enabling the recruitment of ZAP70. In turn ZAP70 phosphorylates LAT, which recruits numerous signaling molecules to form the LAT signalosome. The LAT signalosome propagates signal branching to three major signaling pathways, the calcium, the mitogen-activated protein kinase (MAPK) kinase and the nuclear factor NF-kappa-B (NF-kB) pathways, leading to the mobilization of transcription factors that are critical for gene expression and essential for T cell growth and differentiation. The T cell repertoire is generated in the thymus, by V-(D)-J rearrangement. This repertoire is then shaped by intrathymic selection events to generate a peripheral T cell pool of self-MH restricted, non-autoaggressive T cells. Post-thymic interaction of alpha-beta TR with the pMH complexes shapes TR structural and functional avidity. In Homo sapiens (Human), this protein is T cell receptor alpha variable 21.